Reading from the N-terminus, the 511-residue chain is Inositol-3-phosphate synthase (511 aa).

Gly70, Asn71, Asn72, Asp143, Ser179, Ile180, Gln190, Arg193, Ser230, Ala231, Asn232, Thr233, Gly281, Ser282, Asp306, Thr309, Asn340, Asn341, Asp342, Lys355, Gly393, Asp394, Asp422, and Ser423 together coordinate NAD(+).

This sequence belongs to the myo-inositol 1-phosphate synthase family. It depends on NAD(+) as a cofactor.

The protein localises to the cytoplasm. The catalysed reaction is D-glucose 6-phosphate = 1D-myo-inositol 3-phosphate. It functions in the pathway polyol metabolism; myo-inositol biosynthesis; myo-inositol from D-glucose 6-phosphate: step 1/2. Its function is as follows. Key enzyme in myo-inositol biosynthesis pathway that catalyzes the conversion of glucose 6-phosphate to 1-myo-inositol 1-phosphate in a NAD-dependent manner. Rate-limiting enzyme in the synthesis of all inositol-containing compounds. This chain is Inositol-3-phosphate synthase (ino1), found in Dictyostelium discoideum (Social amoeba).